A 457-amino-acid chain; its full sequence is Serine/threonine-protein phosphatase 2A activator 2 (457 aa).

Disordered regions lie at residues Asp-387 to Gln-407 and Ala-426 to Asp-457. The span at His-391–Ala-400 shows a compositional bias: basic residues.

It belongs to the PTPA-type PPIase family.

It is found in the cytoplasm. It catalyses the reaction [protein]-peptidylproline (omega=180) = [protein]-peptidylproline (omega=0). PPIases accelerate the folding of proteins. It catalyzes the cis-trans isomerization of proline imidic peptide bonds in oligopeptides. Acts as a regulatory subunit for PP2A-like phosphatases modulating their activity or substrate specificity, probably by inducing a conformational change in the catalytic subunit, a direct target of the PPIase. Can reactivate inactive phosphatase PP2A-phosphatase methylesterase complexes (PP2Ai) in presence of ATP and Mg(2+) by dissociating the inactive form from the complex. This Mycosarcoma maydis (Corn smut fungus) protein is Serine/threonine-protein phosphatase 2A activator 2 (RRD2).